A 199-amino-acid chain; its full sequence is uncharacterized protein (199 aa).

The next 4 helical transmembrane spans lie at 35 to 55 (CELA…IFYD), 57 to 77 (FVIF…YLEF), 94 to 114 (LSAA…IFFG), and 131 to 151 (YYGC…ASFA).

It localises to the membrane. This is an uncharacterized protein from Caenorhabditis elegans.